Reading from the N-terminus, the 501-residue chain is E3 ubiquitin-protein ligase TRIM35 (501 aa).

At Met-1 the chain carries N-acetylmethionine. At Ser-8 the chain carries Phosphoserine. The RING-type zinc-finger motif lies at 21-61 (CAVCYDPFRDAVTLRCGHNFCRRCVSGCWEVQTTPSCPVCK). The B box-type zinc finger occupies 96-137 (RSPRPCRAHRAPLTLFCLEDKELLCCACQADARHQEHRVQPI). Zn(2+) contacts are provided by Cys-101, His-104, Cys-123, and His-129. A coiled-coil region spans residues 200 to 252 (VEEQATLDAMKEESRKKHLQAEEKMKQLAEQTEALAREIERLQMEMKEDDMTF). The B30.2/SPRY domain maps to 284–495 (LESLQYRVWK…LRICHLRVSI (212 aa)).

Belongs to the TRIM/RBCC family. In terms of assembly, interacts with PKM isoform M2, but not isoform M1; this interaction may compete with that between PKM and FGFR1, and hence reduces FGFR1-dependent tyrosine phosphorylation of PKM. Interacts with IRF7; this interaction promotes IRF7 proteasomal degradation. Interacts with TRAF3; this interaction promotes TRAF3 activation. In terms of tissue distribution, widely expressed. Highly expressed in brain, heart, kidney, spleen, skeletal muscle, lung and thymus. Lower expression found in stomach, large intestine and bone marrow.

The protein localises to the cytoplasm. The protein resides in the nucleus. The enzyme catalyses S-ubiquitinyl-[E2 ubiquitin-conjugating enzyme]-L-cysteine + [acceptor protein]-L-lysine = [E2 ubiquitin-conjugating enzyme]-L-cysteine + N(6)-ubiquitinyl-[acceptor protein]-L-lysine.. Its pathway is protein modification; protein ubiquitination. In terms of biological role, E3 ubiquitin-protein ligase that participates in multiple biological processes including cell death, glucose metabolism, and in particular, the innate immune response. Mediates 'Lys-63'-linked polyubiquitination of TRAF3 thereby promoting type I interferon production via RIG-I signaling pathway. Can also catalyze 'Lys-48'-linked polyubiquitination and proteasomal degradation of viral proteins such as influenza virus PB2. Acts as a negative feedback regulator of TLR7- and TLR9-triggered signaling. Mechanistically, promotes the 'Lys-48'-linked ubiquitination of IRF7 and induces its degradation via a proteasome-dependent pathway. Reduces FGFR1-dependent tyrosine phosphorylation of PKM, inhibiting PKM-dependent lactate production, glucose metabolism, and cell growth. The protein is E3 ubiquitin-protein ligase TRIM35 (Trim35) of Mus musculus (Mouse).